The primary structure comprises 401 residues: Ornithine aminotransferase (401 aa).

K258 carries the N6-(pyridoxal phosphate)lysine modification.

This sequence belongs to the class-III pyridoxal-phosphate-dependent aminotransferase family. OAT subfamily. Pyridoxal 5'-phosphate serves as cofactor.

It localises to the cytoplasm. It carries out the reaction a 2-oxocarboxylate + L-ornithine = L-glutamate 5-semialdehyde + an L-alpha-amino acid. It functions in the pathway amino-acid biosynthesis; L-proline biosynthesis; L-glutamate 5-semialdehyde from L-ornithine: step 1/1. In terms of biological role, catalyzes the interconversion of ornithine to glutamate semialdehyde. The sequence is that of Ornithine aminotransferase from Bacillus subtilis (strain 168).